The following is a 130-amino-acid chain: Small ribosomal subunit protein uS8 (130 aa).

It belongs to the universal ribosomal protein uS8 family. In terms of assembly, part of the 30S ribosomal subunit.

In terms of biological role, one of the primary rRNA binding proteins, it binds directly to 16S rRNA central domain where it helps coordinate assembly of the platform of the 30S subunit. The sequence is that of Small ribosomal subunit protein uS8 from Methanothermococcus thermolithotrophicus (Methanococcus thermolithotrophicus).